A 510-amino-acid chain; its full sequence is tRNA-2-methylthio-N(6)-dimethylallyladenosine synthase (510 aa).

The MTTase N-terminal domain maps to 19–135 (RTFEVRTYGC…LPALLDRARH (117 aa)). 6 residues coordinate [4Fe-4S] cluster: C28, C64, C98, C172, C176, and C179. One can recognise a Radical SAM core domain in the interval 158–394 (RESSYAAWVS…IELQERISLE (237 aa)). One can recognise a TRAM domain in the interval 397–467 (TAQIGRRVEL…PHHLIADAGL (71 aa)). A disordered region spans residues 477–510 (DAHAAGQKPRTGVGLGMPAVGAPDPLPATTGCAR).

Belongs to the methylthiotransferase family. MiaB subfamily. As to quaternary structure, monomer. The cofactor is [4Fe-4S] cluster.

The protein resides in the cytoplasm. The enzyme catalyses N(6)-dimethylallyladenosine(37) in tRNA + (sulfur carrier)-SH + AH2 + 2 S-adenosyl-L-methionine = 2-methylsulfanyl-N(6)-dimethylallyladenosine(37) in tRNA + (sulfur carrier)-H + 5'-deoxyadenosine + L-methionine + A + S-adenosyl-L-homocysteine + 2 H(+). Functionally, catalyzes the methylthiolation of N6-(dimethylallyl)adenosine (i(6)A), leading to the formation of 2-methylthio-N6-(dimethylallyl)adenosine (ms(2)i(6)A) at position 37 in tRNAs that read codons beginning with uridine. The chain is tRNA-2-methylthio-N(6)-dimethylallyladenosine synthase from Mycolicibacterium vanbaalenii (strain DSM 7251 / JCM 13017 / BCRC 16820 / KCTC 9966 / NRRL B-24157 / PYR-1) (Mycobacterium vanbaalenii).